Reading from the N-terminus, the 395-residue chain is Tyrosine--tRNA ligase (395 aa).

The short motif at 42–51 (PTAPDIHLGH) is the 'HIGH' region element. The 'KMSKS' region motif lies at 226-230 (KMSKS). Lys-229 serves as a coordination point for ATP. The S4 RNA-binding domain occupies 334 to 394 (IAISNLLKDA…GKRKFARITL (61 aa)).

Belongs to the class-I aminoacyl-tRNA synthetase family. TyrS type 2 subfamily. Homodimer.

The protein localises to the cytoplasm. It carries out the reaction tRNA(Tyr) + L-tyrosine + ATP = L-tyrosyl-tRNA(Tyr) + AMP + diphosphate + H(+). In terms of biological role, catalyzes the attachment of tyrosine to tRNA(Tyr) in a two-step reaction: tyrosine is first activated by ATP to form Tyr-AMP and then transferred to the acceptor end of tRNA(Tyr). The chain is Tyrosine--tRNA ligase from Photobacterium profundum (strain SS9).